A 67-amino-acid polypeptide reads, in one-letter code: MRLLVCLVFLASFAMVCQGHSSGYTRPLRKPSRPIFIRPIGCDVCYGIPSSTARLCCFRYGDCCHLG.

The first 19 residues, 1–19, serve as a signal peptide directing secretion; sequence MRLLVCLVFLASFAMVCQG. 3 cysteine pairs are disulfide-bonded: Cys-42/Cys-56, Cys-45/Cys-63, and Cys-57/Cys-64. The residue at position 66 (Leu-66) is a Leucine amide.

The protein belongs to the penaeidin family.

Its subcellular location is the cytoplasmic granule. In terms of biological role, antibacterial and antifungal activity. Presents chitin-binding activity. The protein is Penaeidin-4d of Penaeus setiferus (Atlantic white shrimp).